The following is a 797-amino-acid chain: Phenylalanine--tRNA ligase beta subunit (797 aa).

The region spanning Met-40–Phe-154 is the tRNA-binding domain. In terms of domain architecture, B5 spans Pro-407–Ser-482. Mg(2+) is bound by residues Asp-460, Asp-466, Glu-469, and Glu-470. The FDX-ACB domain occupies Pro-704–Arg-797.

This sequence belongs to the phenylalanyl-tRNA synthetase beta subunit family. Type 1 subfamily. In terms of assembly, tetramer of two alpha and two beta subunits. It depends on Mg(2+) as a cofactor.

It is found in the cytoplasm. The enzyme catalyses tRNA(Phe) + L-phenylalanine + ATP = L-phenylalanyl-tRNA(Phe) + AMP + diphosphate + H(+). This is Phenylalanine--tRNA ligase beta subunit from Lactococcus lactis subsp. lactis (strain IL1403) (Streptococcus lactis).